Here is a 362-residue protein sequence, read N- to C-terminus: Glutaminase-asparaginase (362 aa).

A signal peptide spans 1-25 (MKSALKTFVPGALALLLLFPVAAQA). The region spanning 35-362 (ANVVILATGG…KELQRMFWEY (328 aa)) is the Asparaginase/glutaminase domain. Thr45 functions as the Acyl-ester intermediate in the catalytic mechanism. Substrate is bound by residues Ser92 and 125–126 (TD).

It belongs to the asparaginase 1 family. As to quaternary structure, homotetramer.

The protein localises to the periplasm. It catalyses the reaction L-glutamine + H2O = L-glutamate + NH4(+). The enzyme catalyses L-asparagine + H2O = L-aspartate + NH4(+). The chain is Glutaminase-asparaginase from Pseudomonas fluorescens biotype A.